Reading from the N-terminus, the 550-residue chain is Keratin, type II cytoskeletal 74 (550 aa).

Positions 1 to 140 (MSRQLNIKSG…DPEIQKVRAQ (140 aa)) are head. Positions 141 to 176 (EREQIMALNNKFASFIDKVRFLEQQNQVLGTKWELL) are coil 1A. The IF rod domain occupies 141-468 (EREQIMALNN…KLLEGEECWM (328 aa)). Residues 177-195 (QQMDLNNCRKNLEPILEGY) are linker 1. Residues 196–287 (IGNLRKQLEM…CLYDAEVAQI (92 aa)) are coil 1B. Residues 288–311 (QTHTSETSVILSMDNNRYLDLDSI) form a linker 12 region. The coil 2 stretch occupies residues 312–464 (IAEVRAQYED…ATYSKLLEGE (153 aa)). Positions 465 to 550 (ECWMSGENPS…VSSRARKAAR (86 aa)) are tail. The interval 491–550 (HPGSSASTDLGASTMASTGTSSSSSTQSGQTRAKGARVGDPKDSQDKSTPVSSRARKAAR) is disordered. The segment covering 502-521 (ASTMASTGTSSSSSTQSGQT) has biased composition (low complexity). The segment covering 527–536 (RVGDPKDSQD) has biased composition (basic and acidic residues).

It belongs to the intermediate filament family. In terms of assembly, heterotetramer of two type I and two type II keratins.

Has a role in hair formation. Specific component of keratin intermediate filaments in the inner root sheath (IRS) of the hair follicle. The chain is Keratin, type II cytoskeletal 74 (KRT74) from Bos taurus (Bovine).